A 295-amino-acid polypeptide reads, in one-letter code: Tyrosine recombinase XerC (295 aa).

In terms of domain architecture, Core-binding (CB) spans 1–85 (MQNALQKYYD…ALRQFLAYLV (85 aa)). In terms of domain architecture, Tyr recombinase spans 106-285 (YLPKNIDQEQ…DFKHLTDVYD (180 aa)). Residues Arg-145, Lys-169, His-237, Arg-240, and His-263 contribute to the active site. The active-site O-(3'-phospho-DNA)-tyrosine intermediate is the Tyr-272.

The protein belongs to the 'phage' integrase family. XerC subfamily. As to quaternary structure, forms a cyclic heterotetrameric complex composed of two molecules of XerC and two molecules of XerD.

Its subcellular location is the cytoplasm. In terms of biological role, site-specific tyrosine recombinase, which acts by catalyzing the cutting and rejoining of the recombining DNA molecules. The XerC-XerD complex is essential to convert dimers of the bacterial chromosome into monomers to permit their segregation at cell division. It also contributes to the segregational stability of plasmids. This chain is Tyrosine recombinase XerC, found in Actinobacillus succinogenes (strain ATCC 55618 / DSM 22257 / CCUG 43843 / 130Z).